The following is a 129-amino-acid chain: Glycine cleavage system H protein (129 aa).

Positions 24–106 constitute a Lipoyl-binding domain; the sequence is LVRVGISAFA…HGEGWLLVLR (83 aa). An N6-lipoyllysine modification is found at K65.

The protein belongs to the GcvH family. As to quaternary structure, the glycine cleavage system is composed of four proteins: P, T, L and H. The cofactor is (R)-lipoate.

Its function is as follows. The glycine cleavage system catalyzes the degradation of glycine. The H protein shuttles the methylamine group of glycine from the P protein to the T protein. This chain is Glycine cleavage system H protein, found in Parasynechococcus marenigrum (strain WH8102).